The chain runs to 122 residues: Seripauperin-5 (122 aa).

Residues 7-24 (IAAGVAAIAAGASAAATT) form a helical membrane-spanning segment.

It belongs to the SRP1/TIP1 family. Seripauperin subfamily.

It is found in the membrane. This Saccharomyces cerevisiae (strain ATCC 204508 / S288c) (Baker's yeast) protein is Seripauperin-5 (PAU5).